We begin with the raw amino-acid sequence, 613 residues long: Protein translocase subunit SecD (613 aa).

A run of 6 helical transmembrane segments spans residues 10 to 30 (ALVV…WFYF), 452 to 472 (KGTL…VVYY), 477 to 497 (LVAD…MSMI), 503 to 523 (LPGI…NVLI), 548 to 568 (VFWT…VLFQ), and 576 to 596 (GFAV…IVVT).

The protein belongs to the SecD/SecF family. SecD subfamily. In terms of assembly, forms a complex with SecF. Part of the essential Sec protein translocation apparatus which comprises SecA, SecYEG and auxiliary proteins SecDF-YajC and YidC.

The protein localises to the cell inner membrane. Functionally, part of the Sec protein translocase complex. Interacts with the SecYEG preprotein conducting channel. SecDF uses the proton motive force (PMF) to complete protein translocation after the ATP-dependent function of SecA. The sequence is that of Protein translocase subunit SecD from Anaeromyxobacter dehalogenans (strain 2CP-C).